We begin with the raw amino-acid sequence, 456 residues long: L-2-hydroxyglutarate dehydrogenase, mitochondrial (456 aa).

The N-terminal 20 residues, 1–20 (MLKTSFLLSKRNAVSLSRVL), are a transit peptide targeting the mitochondrion.

The protein belongs to the L2HGDH family. The cofactor is FAD.

It is found in the mitochondrion. It carries out the reaction (S)-2-hydroxyglutarate + A = 2-oxoglutarate + AH2. This Nematostella vectensis (Starlet sea anemone) protein is L-2-hydroxyglutarate dehydrogenase, mitochondrial.